Here is a 398-residue protein sequence, read N- to C-terminus: Tyrosine--tRNA ligase (398 aa).

Residues 48 to 57 (PTGADIHLGH) carry the 'HIGH' region motif. The short motif at 235–239 (KMSKS) is the 'KMSKS' region element. Residue lysine 238 participates in ATP binding. One can recognise an S4 RNA-binding domain in the interval 334-398 (VKLAYLLGAT…GKNKFVRLVL (65 aa)).

It belongs to the class-I aminoacyl-tRNA synthetase family. TyrS type 2 subfamily. Homodimer.

It is found in the cytoplasm. The enzyme catalyses tRNA(Tyr) + L-tyrosine + ATP = L-tyrosyl-tRNA(Tyr) + AMP + diphosphate + H(+). Catalyzes the attachment of tyrosine to tRNA(Tyr) in a two-step reaction: tyrosine is first activated by ATP to form Tyr-AMP and then transferred to the acceptor end of tRNA(Tyr). This chain is Tyrosine--tRNA ligase, found in Trichormus variabilis (strain ATCC 29413 / PCC 7937) (Anabaena variabilis).